The primary structure comprises 60 residues: Homeobox protein EgHBX4 (60 aa).

A DNA-binding region (homeobox) is located at residues 1–60 (SRRERTIYTPEQLEAMEEVFGVNRYPDVSMREELASRLGINESKIQVWFKNRRAKLRNLE).

It belongs to the paired homeobox family. Bicoid subfamily.

It is found in the nucleus. This Echinococcus granulosus (Hydatid tapeworm) protein is Homeobox protein EgHBX4 (HBX4).